The chain runs to 142 residues: Neuritin (142 aa).

An N-terminal signal peptide occupies residues 1-27; the sequence is MGLTLSGRYISLFLAVQIAYLLQAVRA. A lipid anchor (GPI-anchor amidated alanine) is attached at A112. A propeptide spans 113-142 (removed in mature form); that stretch reads GGNGAIRSSVPFGVTLLITALSALVTWMQF.

This sequence belongs to the neuritin family.

Its subcellular location is the cell membrane. It localises to the synapse. In terms of biological role, modulates postsynaptic dendritic arbor elaboration and synaptic maturation. This Danio rerio (Zebrafish) protein is Neuritin (nrn1).